The chain runs to 216 residues: Serine/threonine-protein phosphatase 1 (216 aa).

Mn(2+) contacts are provided by aspartate 24, histidine 26, aspartate 53, and asparagine 79. Histidine 80 acts as the Proton donor in catalysis. Residue histidine 185 participates in Mn(2+) binding.

Belongs to the PPP phosphatase family. PP-1 subfamily. Mn(2+) serves as cofactor.

The catalysed reaction is O-phospho-L-seryl-[protein] + H2O = L-seryl-[protein] + phosphate. It carries out the reaction O-phospho-L-threonyl-[protein] + H2O = L-threonyl-[protein] + phosphate. Its activity is regulated as follows. Inhibited by cadmium, copper, zinc when added cobalt when added concomitantly with manganese. Can hydrolyze phosphorylated Ser-, Thr- or Tyr-substrates in vitro. The natural substrate is unknown. In Salmonella typhimurium (strain LT2 / SGSC1412 / ATCC 700720), this protein is Serine/threonine-protein phosphatase 1 (pphA).